The primary structure comprises 351 residues: Anthranilate phosphoribosyltransferase (351 aa).

Residues G84, 87–88 (GD), 95–98 (NISS), 113–121 (KHGNRGASS), and A125 each bind 5-phospho-alpha-D-ribose 1-diphosphate. An anthranilate-binding site is contributed by G84. A Mg(2+)-binding site is contributed by S97. N116 provides a ligand contact to anthranilate. R171 provides a ligand contact to anthranilate. Mg(2+) contacts are provided by D229 and K230.

Belongs to the anthranilate phosphoribosyltransferase family. As to quaternary structure, homodimer. Mg(2+) is required as a cofactor.

It carries out the reaction N-(5-phospho-beta-D-ribosyl)anthranilate + diphosphate = 5-phospho-alpha-D-ribose 1-diphosphate + anthranilate. Its pathway is amino-acid biosynthesis; L-tryptophan biosynthesis; L-tryptophan from chorismate: step 2/5. In terms of biological role, catalyzes the transfer of the phosphoribosyl group of 5-phosphorylribose-1-pyrophosphate (PRPP) to anthranilate to yield N-(5'-phosphoribosyl)-anthranilate (PRA). The chain is Anthranilate phosphoribosyltransferase from Clavibacter michiganensis subsp. michiganensis (strain NCPPB 382).